We begin with the raw amino-acid sequence, 213 residues long: Pyridoxine/pyridoxamine 5'-phosphate oxidase (213 aa).

FMN is bound by residues 57-62 (RIVLLR), 77-78 (FT), Arg-83, Lys-84, and Gln-106. Arg-62 lines the substrate pocket. Residues Tyr-124, Arg-128, and Ser-132 each contribute to the substrate site. Positions 135–163 (GARASDQSRPLPDRKTLQKRVEEEEARYP) are disordered. 141–142 (QS) provides a ligand contact to FMN. The span at 145 to 163 (LPDRKTLQKRVEEEEARYP) shows a compositional bias: basic and acidic residues. Trp-186 lines the FMN pocket. Position 192–194 (192–194 (RLH)) interacts with substrate. Residue Arg-196 coordinates FMN.

This sequence belongs to the pyridoxamine 5'-phosphate oxidase family. Homodimer. The cofactor is FMN.

The enzyme catalyses pyridoxamine 5'-phosphate + O2 + H2O = pyridoxal 5'-phosphate + H2O2 + NH4(+). It carries out the reaction pyridoxine 5'-phosphate + O2 = pyridoxal 5'-phosphate + H2O2. The protein operates within cofactor metabolism; pyridoxal 5'-phosphate salvage; pyridoxal 5'-phosphate from pyridoxamine 5'-phosphate: step 1/1. It participates in cofactor metabolism; pyridoxal 5'-phosphate salvage; pyridoxal 5'-phosphate from pyridoxine 5'-phosphate: step 1/1. Functionally, catalyzes the oxidation of either pyridoxine 5'-phosphate (PNP) or pyridoxamine 5'-phosphate (PMP) into pyridoxal 5'-phosphate (PLP). In Granulibacter bethesdensis (strain ATCC BAA-1260 / CGDNIH1), this protein is Pyridoxine/pyridoxamine 5'-phosphate oxidase.